The chain runs to 387 residues: Norsolorinic acid reductase stcV (387 aa).

Asp-69 is an NADP(+) binding site. Tyr-74 serves as the catalytic Proton donor. Position 148 (His-148) interacts with substrate. NADP(+) contacts are provided by residues 178–179 (SD), Gln-204, 233–243 (GALGRGQYKSA), and 301–309 (RTVEQLEAN).

Belongs to the aldo/keto reductase family. Aldo/keto reductase 2 subfamily.

Its pathway is mycotoxin biosynthesis; sterigmatocystin biosynthesis. Norsolorinic acid reductase; part of the gene cluster that mediates the biosynthesis of sterigmatocystin (ST), a polyketide-derived furanocoumarin which is part of the most toxic and carcinogenic compounds among the known mycotoxins. The first step in the biosynthesis of sterigmatocystin is the production of hexanoate by the fatty acid synthase (FAS) units stcJ and stcK. The polyketide backbone is assembled by the non-reducing polyketide synthase stcA by condensation of the starter hexanoyl-CoA and 7 malonyl-CoA extender units followed by cyclization and release of norsolorinic acid. Norsolorinic acid is the first stable intermediate in the biosynthesis of sterigmatocystin and is converted into averantin (AVN) by the ketoreductase stcE which reduces the hexanoate ketone to an alcohol. Averantin is then oxidized into 5'-hydroxyaverantin (HAVN) by the cytochrome P450 monooxygenase stcF. 5'-hydroxyaverantin is further converted to 5'-oxyaverantin (OAVN) by the 5'-hydroxyaverantin dehydrogenase stcG. The next step is the conversion of OAVN into averufin (AVF) which is catalyzed by a yet to be identified enzyme. The cytochrome P450 monooxygenase stcB and the flavin-binding monooxygenase stcW are both required for the conversion of averufin to 1-hydroxyversicolorone. The esterase stcI probably catalyzes the formation of versiconal hemiacetal acetate from 1-hydroxyversicolorone. The oxydoreductase stcN then probably catalyzes the biosynthetic step from versiconal to versicolorin B (VERB). The next step is performed by the versicolorin B desaturase stcL to produce versicolorin A (VERA). The ketoreductase stcU and the cytochrome P450 monooxygenase stcS are involved in the conversion of versicolorin A to demethylsterigmatocystin. The Baeyer-Villiger oxidas stcQ and the reductase stcR might be involved in the biosynthetic step from versicolorin A to demethylsterigmatocystin. The final step in the biosynthesis of sterigmatocystin is the methylation of demethylsterigmatocystin catalyzed by the methyltransferase stcP. The sequence is that of Norsolorinic acid reductase stcV from Emericella nidulans (strain FGSC A4 / ATCC 38163 / CBS 112.46 / NRRL 194 / M139) (Aspergillus nidulans).